The following is a 299-amino-acid chain: Coenzyme PQQ synthesis protein B (299 aa).

This sequence belongs to the PqqB family.

It functions in the pathway cofactor biosynthesis; pyrroloquinoline quinone biosynthesis. Functionally, may be involved in the transport of PQQ or its precursor to the periplasm. In Xanthomonas oryzae pv. oryzae (strain MAFF 311018), this protein is Coenzyme PQQ synthesis protein B.